The chain runs to 610 residues: POU domain, class 6, transcription factor 1 (610 aa).

Residues Ser55 to Thr87 are disordered. Positions Glu448–Glu522 constitute a POU-specific domain. A DNA-binding region (homeobox) is located at residues Lys543–Ser602.

The protein belongs to the POU transcription factor family. Class-6 subfamily. As to expression, ubiquitously expressed during embryogenesis.

The protein resides in the nucleus. Transcription factor that binds with high affinity to the motif 5'-TAATGARAT-3'. In Danio rerio (Zebrafish), this protein is POU domain, class 6, transcription factor 1 (pou6f1).